Here is an 84-residue protein sequence, read N- to C-terminus: Anthracycline acyl carrier protein DauA (84 aa).

Positions 3 to 80 constitute a Carrier domain; sequence ELSLAELREI…SMLIFVNERL (78 aa). An O-(pantetheine 4'-phosphoryl)serine modification is found at S40.

It functions in the pathway antibiotic biosynthesis; daunorubicin biosynthesis. Its pathway is antibiotic biosynthesis; carminomycin biosynthesis. It participates in antibiotic biosynthesis; rhodomycin biosynthesis. The protein operates within antibiotic biosynthesis; aclacinomycin biosynthesis. Involved in the biosynthesis of aklanonate which is an important precursor common to the formation of the clinically significant anthracyclines such as carminomycin, daunorubicin (daunomycin), rhodomycin, aclacinomycin T (aklavin) and aclacinomycin A (aclarubicin). These compounds are aromatic polyketide antibiotics that exhibit high cytotoxicity and are widely applied in the chemotherapy of a variety of cancers. This is Anthracycline acyl carrier protein DauA (dauA) from Streptomyces sp. (strain C5).